The following is a 345-amino-acid chain: Carbamoyl phosphate synthase small chain (345 aa).

The segment at 1–169 (MKKYLVMEDG…FVKGEEGGTV (169 aa)) is CPSase. The L-glutamine site is built by S45, G213, and G215. One can recognise a Glutamine amidotransferase type-1 domain in the interval 168 to 345 (TVLFIDLGSK…GEMKRRIGYA (178 aa)). C242 acts as the Nucleophile in catalysis. Positions 243, 246, 282, 284, and 285 each coordinate L-glutamine. Active-site residues include H321 and E323.

It belongs to the CarA family. In terms of assembly, composed of two chains; the small (or glutamine) chain promotes the hydrolysis of glutamine to ammonia, which is used by the large (or ammonia) chain to synthesize carbamoyl phosphate. Tetramer of heterodimers (alpha,beta)4.

It catalyses the reaction hydrogencarbonate + L-glutamine + 2 ATP + H2O = carbamoyl phosphate + L-glutamate + 2 ADP + phosphate + 2 H(+). The catalysed reaction is L-glutamine + H2O = L-glutamate + NH4(+). It participates in amino-acid biosynthesis; L-arginine biosynthesis; carbamoyl phosphate from bicarbonate: step 1/1. It functions in the pathway pyrimidine metabolism; UMP biosynthesis via de novo pathway; (S)-dihydroorotate from bicarbonate: step 1/3. Functionally, small subunit of the glutamine-dependent carbamoyl phosphate synthetase (CPSase). CPSase catalyzes the formation of carbamoyl phosphate from the ammonia moiety of glutamine, carbonate, and phosphate donated by ATP, constituting the first step of 2 biosynthetic pathways, one leading to arginine and/or urea and the other to pyrimidine nucleotides. The small subunit (glutamine amidotransferase) binds and cleaves glutamine to supply the large subunit with the substrate ammonia. The polypeptide is Carbamoyl phosphate synthase small chain (Thermoplasma volcanium (strain ATCC 51530 / DSM 4299 / JCM 9571 / NBRC 15438 / GSS1)).